The primary structure comprises 312 residues: Dehydrin CAS31 (312 aa).

Disordered stretches follow at residues 1–88 (MSQY…HTGG) and 248–287 (GTEQNTYGTGTGTGHGTTGYGSTGTGHGTTGYGDEQHHGE). The span at 21–30 (PLTSQGQVDQ) shows a compositional bias: polar residues. Residues 35–46 (ISGGGMTGATGH) show a composition bias toward gly residues. A compositionally biased stretch (low complexity) spans 55 to 66 (HGVGVDQTTGFG). Composition is skewed to gly residues over residues 67-88 (SNTGTGTGYGTHTGSGGTHTGG) and 256-278 (TGTGTGHGTTGYGSTGTGHGTTG).

The protein belongs to the plant dehydrin family. In terms of assembly, interacts with the leghemoglobin LB120-1 in the cytoplasm; this interaction leads to LB120-1 protection from denaturation under thermal and drought stresses. As to expression, expressed in nodules and roots.

The protein resides in the cytoplasm. Functionally, intrinsically disordered protein acting as a chaperone. Ensures leghemoglobins (e.g. LB120-1) protection from denaturation under thermal and drought stresses to delay root nodule nitrogenase inactivation and subsequent nodule senescence, thus supporting symbiotic nitrogen fixation (SNF). This Medicago truncatula (Barrel medic) protein is Dehydrin CAS31.